We begin with the raw amino-acid sequence, 156 residues long: Arginine repressor (156 aa).

The protein belongs to the ArgR family.

Its subcellular location is the cytoplasm. Its pathway is amino-acid biosynthesis; L-arginine biosynthesis [regulation]. Functionally, regulates arginine biosynthesis genes. The protein is Arginine repressor of Yersinia pseudotuberculosis serotype I (strain IP32953).